Consider the following 540-residue polypeptide: Phenylalanine--tRNA ligase beta subunit (540 aa).

A B5 domain is found at 268–343; the sequence is LQHKSIKITA…ITYGYNNLSP (76 aa). Mg(2+)-binding residues include Asp-321, Asp-327, Glu-330, and Glu-331.

The protein belongs to the phenylalanyl-tRNA synthetase beta subunit family. Type 2 subfamily. Tetramer of two alpha and two beta subunits. The cofactor is Mg(2+).

The protein resides in the cytoplasm. The enzyme catalyses tRNA(Phe) + L-phenylalanine + ATP = L-phenylalanyl-tRNA(Phe) + AMP + diphosphate + H(+). This chain is Phenylalanine--tRNA ligase beta subunit, found in Sulfurisphaera tokodaii (strain DSM 16993 / JCM 10545 / NBRC 100140 / 7) (Sulfolobus tokodaii).